Here is a 525-residue protein sequence, read N- to C-terminus: GMP synthase [glutamine-hydrolyzing] (525 aa).

One can recognise a Glutamine amidotransferase type-1 domain in the interval Arg-9–Leu-207. Cys-86 acts as the Nucleophile in catalysis. Catalysis depends on residues His-181 and Glu-183. In terms of domain architecture, GMPS ATP-PPase spans Trp-208–Arg-400. Ser-235–Ser-241 provides a ligand contact to ATP.

As to quaternary structure, homodimer.

The catalysed reaction is XMP + L-glutamine + ATP + H2O = GMP + L-glutamate + AMP + diphosphate + 2 H(+). It functions in the pathway purine metabolism; GMP biosynthesis; GMP from XMP (L-Gln route): step 1/1. Its function is as follows. Catalyzes the synthesis of GMP from XMP. The chain is GMP synthase [glutamine-hydrolyzing] from Pectobacterium carotovorum subsp. carotovorum (strain PC1).